The sequence spans 414 residues: Gamma-glutamyl phosphate reductase (414 aa).

It belongs to the gamma-glutamyl phosphate reductase family.

The protein resides in the cytoplasm. It carries out the reaction L-glutamate 5-semialdehyde + phosphate + NADP(+) = L-glutamyl 5-phosphate + NADPH + H(+). It functions in the pathway amino-acid biosynthesis; L-proline biosynthesis; L-glutamate 5-semialdehyde from L-glutamate: step 2/2. In terms of biological role, catalyzes the NADPH-dependent reduction of L-glutamate 5-phosphate into L-glutamate 5-semialdehyde and phosphate. The product spontaneously undergoes cyclization to form 1-pyrroline-5-carboxylate. The sequence is that of Gamma-glutamyl phosphate reductase from Xanthomonas oryzae pv. oryzae (strain KACC10331 / KXO85).